A 90-amino-acid polypeptide reads, in one-letter code: Small ribosomal subunit protein uS15 (90 aa).

This sequence belongs to the universal ribosomal protein uS15 family. In terms of assembly, part of the 30S ribosomal subunit. Forms a bridge to the 50S subunit in the 70S ribosome, contacting the 23S rRNA.

Its function is as follows. One of the primary rRNA binding proteins, it binds directly to 16S rRNA where it helps nucleate assembly of the platform of the 30S subunit by binding and bridging several RNA helices of the 16S rRNA. Forms an intersubunit bridge (bridge B4) with the 23S rRNA of the 50S subunit in the ribosome. This Helicobacter pylori (strain P12) protein is Small ribosomal subunit protein uS15.